Reading from the N-terminus, the 174-residue chain is Eukaryotic translation elongation factor 1 epsilon-1 (174 aa).

N-acetylalanine is present on Ala2. The interval 2 to 56 (AAAAELSLLEKSLGLSKGNKYSAQGERQIPVLQTNNGPSLTGLTTIAAHLVKQAN) is N-terminal. The GST C-terminal domain maps to 50–173 (HLVKQANKEY…FIKNRLYTNS (124 aa)). A linker region spans residues 57–63 (KEYLLGS). Residues 64–152 (TAEEKAIVQQ…SRWFCHIQHY (89 aa)) are C-terminal. At Lys138 the chain carries N6-acetyllysine. Residues 153 to 169 (PGIRQHLSSVVFIKNRL) are a coiled coil.

In terms of assembly, part of a multisubunit complex that groups tRNA ligases for Arg (RARS1), Asp (DARS1), Gln (QARS1), Ile (IARS1), Leu (LARS1), Lys (KARS1), Met (MARS1) the bifunctional ligase for Glu and Pro (EPRS1) and the auxiliary subunits AIMP1/p43, AIMP2/p38 and EEF1E1/p18. Can interact simultaneously with MARS1 and EPRS1. Forms a linear complex that contains MARS1, EEF1E1, EPRS1 and AIMP2 that is at the core of the multisubunit complex. Interacts with ATM and ATR. The interaction with ATM, which takes place independently of TP53, is induced by DNA damage that may occur during genotoxic stress or cell growth. The interaction with ATR is enhanced by UV irradiation. In terms of tissue distribution, down-regulated in various cancer tissues.

It localises to the cytoplasm. The protein localises to the cytosol. The protein resides in the nucleus. Functionally, positive modulator of ATM response to DNA damage. This is Eukaryotic translation elongation factor 1 epsilon-1 (EEF1E1) from Homo sapiens (Human).